A 316-amino-acid polypeptide reads, in one-letter code: GTPase Era (316 aa).

An Era-type G domain is found at 9–190 (RAGFAAIIGA…TAKLVSMMPE (182 aa)). The tract at residues 17 to 24 (GAPNAGKS) is G1. 17-24 (GAPNAGKS) lines the GTP pocket. A G2 region spans residues 43 to 47 (QTTRF). Residues 64-67 (DTPG) are G3. GTP contacts are provided by residues 64-68 (DTPGI) and 140-143 (NKID). The segment at 140-143 (NKID) is G4. Residues 169-171 (ISA) are G5. The 78-residue stretch at 221–298 (VHEELPYAAT…HLFLHVKVKE (78 aa)) folds into the KH type-2 domain.

It belongs to the TRAFAC class TrmE-Era-EngA-EngB-Septin-like GTPase superfamily. Era GTPase family. Monomer.

It is found in the cytoplasm. Its subcellular location is the cell inner membrane. Functionally, an essential GTPase that binds both GDP and GTP, with rapid nucleotide exchange. Plays a role in 16S rRNA processing and 30S ribosomal subunit biogenesis and possibly also in cell cycle regulation and energy metabolism. The polypeptide is GTPase Era (Caulobacter vibrioides (strain ATCC 19089 / CIP 103742 / CB 15) (Caulobacter crescentus)).